A 182-amino-acid chain; its full sequence is Peptidoglycan recognition protein 1 (182 aa).

The signal sequence occupies residues 1–18 (MLFACALLALLGLATSCS). 3 disulfides stabilise this stretch: Cys17–Cys141, Cys33–Cys78, and Cys54–Cys60. The N-acetylmuramoyl-L-alanine amidase domain occupies 39–167 (HPVRYVVISH…RDVQSTLSPG (129 aa)).

Belongs to the N-acetylmuramoyl-L-alanine amidase 2 family. In terms of assembly, homodimer; disulfide-linked. Interacts with HSPA1A; this interaction forms a cytotoxic complex that is released by lymphokine-activated killer cells. Interacts with HSPBP1; this interaction blocks the cytotoxic activity of the PGLYRP1-HSPA1A complex. As to expression, strongly expressed in spleen and lung. Also detected in brain and thymus. In the lung, expressed in the intraalveolar space, in the brain, expressed in the Purkinje cells of the cerebellum and in certain layers of neurons in the hippocampus. Also detected in cells filling the space within the intestinal villus.

Its subcellular location is the cytoplasm. It localises to the secreted. In terms of biological role, innate immunity protein that plays several important functions in antimicrobial and antitumor defense systems. Acts as a pattern receptor that binds to murein peptidoglycans (PGN) of Gram-positive bacteria and thus provides bactericidal activity. Forms an equimolar complex with heat shock protein HSPA1A and induces programmed cell death through apoptosis and necroptosis in tumor cell lines by activating the TNFR1 receptor on the target cell membrane. In addition, acts in complex with the Ca(2+)-binding protein S100A4 as a chemoattractant able to induce lymphocyte movement. Mechanistically, this complex acts as a ligand of the chemotactic receptors CCR5 and CXCR3 which are present on the cells of the immune system. Also promotes the activation of lymphocytes that become able to kill virus-infected cells as well as tumor cells by modulating the spectrum of their target-cell specificity. Induction of cytotoxicity on monocyte surface requires interaction with TREM1 receptor. The chain is Peptidoglycan recognition protein 1 (Pglyrp1) from Mus musculus (Mouse).